The sequence spans 352 residues: Holliday junction branch migration complex subunit RuvB (352 aa).

Residues 1–26 form a disordered region; the sequence is MIETDKLRAAAPERLISPQPADRQED. The tract at residues 4–193 is large ATPase domain (RuvB-L); the sequence is TDKLRAAAPE…FGIVSRLEFY (190 aa). ATP is bound by residues L32, R33, G74, K77, T78, T79, 140-142, R183, Y193, and R230; that span reads EDF. T78 contributes to the Mg(2+) binding site. Residues 194–264 form a small ATPAse domain (RuvB-S) region; it reads TPDELGFIVS…VADAALRMLD (71 aa). Residues 267–352 are head domain (RuvB-H); the sequence is SLGLDLMDRK…RPGGTDLFGG (86 aa). 2 residues coordinate DNA: R322 and R327.

Belongs to the RuvB family. Homohexamer. Forms an RuvA(8)-RuvB(12)-Holliday junction (HJ) complex. HJ DNA is sandwiched between 2 RuvA tetramers; dsDNA enters through RuvA and exits via RuvB. An RuvB hexamer assembles on each DNA strand where it exits the tetramer. Each RuvB hexamer is contacted by two RuvA subunits (via domain III) on 2 adjacent RuvB subunits; this complex drives branch migration. In the full resolvosome a probable DNA-RuvA(4)-RuvB(12)-RuvC(2) complex forms which resolves the HJ.

Its subcellular location is the cytoplasm. The enzyme catalyses ATP + H2O = ADP + phosphate + H(+). Functionally, the RuvA-RuvB-RuvC complex processes Holliday junction (HJ) DNA during genetic recombination and DNA repair, while the RuvA-RuvB complex plays an important role in the rescue of blocked DNA replication forks via replication fork reversal (RFR). RuvA specifically binds to HJ cruciform DNA, conferring on it an open structure. The RuvB hexamer acts as an ATP-dependent pump, pulling dsDNA into and through the RuvAB complex. RuvB forms 2 homohexamers on either side of HJ DNA bound by 1 or 2 RuvA tetramers; 4 subunits per hexamer contact DNA at a time. Coordinated motions by a converter formed by DNA-disengaged RuvB subunits stimulates ATP hydrolysis and nucleotide exchange. Immobilization of the converter enables RuvB to convert the ATP-contained energy into a lever motion, pulling 2 nucleotides of DNA out of the RuvA tetramer per ATP hydrolyzed, thus driving DNA branch migration. The RuvB motors rotate together with the DNA substrate, which together with the progressing nucleotide cycle form the mechanistic basis for DNA recombination by continuous HJ branch migration. Branch migration allows RuvC to scan DNA until it finds its consensus sequence, where it cleaves and resolves cruciform DNA. This is Holliday junction branch migration complex subunit RuvB from Azoarcus sp. (strain BH72).